The following is a 133-amino-acid chain: MDPLPRRASLQNTGNVGEGWVRQYLCQQGWQILAQRWRCPWGELDLVAHKADVLIFVEVKTRSPGSWDRGGLLAVGIPKQRRLIRAAQAFLSQHPHLSELSCRFDVALIERRASGEGVSYALVDYLQAAFEIC.

This sequence belongs to the UPF0102 family.

The protein is UPF0102 protein CYA_0680 of Synechococcus sp. (strain JA-3-3Ab) (Cyanobacteria bacterium Yellowstone A-Prime).